Reading from the N-terminus, the 695-residue chain is DNA ligase (695 aa).

Residues 36–40 (DADYD), 85–86 (SL), and glutamate 123 each bind NAD(+). The active-site N6-AMP-lysine intermediate is the lysine 125. Residues arginine 146, glutamate 182, lysine 318, and lysine 342 each coordinate NAD(+). Zn(2+) contacts are provided by cysteine 436, cysteine 439, cysteine 454, and cysteine 460. The BRCT domain occupies 617-695 (LQSGDLAGKT…EDGLKALLSQ (79 aa)).

It belongs to the NAD-dependent DNA ligase family. LigA subfamily. It depends on Mg(2+) as a cofactor. The cofactor is Mn(2+).

The enzyme catalyses NAD(+) + (deoxyribonucleotide)n-3'-hydroxyl + 5'-phospho-(deoxyribonucleotide)m = (deoxyribonucleotide)n+m + AMP + beta-nicotinamide D-nucleotide.. DNA ligase that catalyzes the formation of phosphodiester linkages between 5'-phosphoryl and 3'-hydroxyl groups in double-stranded DNA using NAD as a coenzyme and as the energy source for the reaction. It is essential for DNA replication and repair of damaged DNA. This Bordetella avium (strain 197N) protein is DNA ligase.